A 210-amino-acid chain; its full sequence is Imidazole glycerol phosphate synthase subunit HisH (210 aa).

In terms of domain architecture, Glutamine amidotransferase type-1 spans 3-208; that stretch reads PIAIIDYGMG…GELVRHAGNA (206 aa). Cys81 functions as the Nucleophile in the catalytic mechanism. Active-site residues include His183 and Glu185.

As to quaternary structure, heterodimer of HisH and HisF.

It is found in the cytoplasm. The catalysed reaction is 5-[(5-phospho-1-deoxy-D-ribulos-1-ylimino)methylamino]-1-(5-phospho-beta-D-ribosyl)imidazole-4-carboxamide + L-glutamine = D-erythro-1-(imidazol-4-yl)glycerol 3-phosphate + 5-amino-1-(5-phospho-beta-D-ribosyl)imidazole-4-carboxamide + L-glutamate + H(+). It carries out the reaction L-glutamine + H2O = L-glutamate + NH4(+). The protein operates within amino-acid biosynthesis; L-histidine biosynthesis; L-histidine from 5-phospho-alpha-D-ribose 1-diphosphate: step 5/9. Its function is as follows. IGPS catalyzes the conversion of PRFAR and glutamine to IGP, AICAR and glutamate. The HisH subunit catalyzes the hydrolysis of glutamine to glutamate and ammonia as part of the synthesis of IGP and AICAR. The resulting ammonia molecule is channeled to the active site of HisF. The sequence is that of Imidazole glycerol phosphate synthase subunit HisH from Moorella thermoacetica (strain ATCC 39073 / JCM 9320).